Here is a 152-residue protein sequence, read N- to C-terminus: Methylglyoxal synthase (152 aa).

In terms of domain architecture, MGS-like spans 1–152 (MELTTRTIAA…YDRYLQQRLK (152 aa)). Residues His-19, Lys-23, 45–48 (TGTT), and 65–66 (SG) contribute to the substrate site. The active-site Proton donor/acceptor is the Asp-71. Substrate is bound at residue His-98.

This sequence belongs to the methylglyoxal synthase family.

The catalysed reaction is dihydroxyacetone phosphate = methylglyoxal + phosphate. Its function is as follows. Catalyzes the formation of methylglyoxal from dihydroxyacetone phosphate. In Yersinia enterocolitica serotype O:8 / biotype 1B (strain NCTC 13174 / 8081), this protein is Methylglyoxal synthase.